We begin with the raw amino-acid sequence, 312 residues long: Phosphoribosylglycinamide formyltransferase, chloroplastic (312 aa).

A chloroplast-targeting transit peptide spans 1–73; that stretch reads MEAQQIISRF…EVCSSSWRIW (73 aa). 109–111 lines the N(1)-(5-phospho-beta-D-ribosyl)glycinamide pocket; sequence GSN. Residues Lys162, 187–190, and Asn204 contribute to the (6R)-10-formyltetrahydrofolate site; that span reads LKLI. The active-site Proton donor is His206. Position 247 (Asp247) interacts with (6R)-10-formyltetrahydrofolate. Glu276 contributes to the N(1)-(5-phospho-beta-D-ribosyl)glycinamide binding site.

The protein belongs to the GART family.

The protein localises to the plastid. It localises to the chloroplast. It carries out the reaction N(1)-(5-phospho-beta-D-ribosyl)glycinamide + (6R)-10-formyltetrahydrofolate = N(2)-formyl-N(1)-(5-phospho-beta-D-ribosyl)glycinamide + (6S)-5,6,7,8-tetrahydrofolate + H(+). The protein operates within purine metabolism; IMP biosynthesis via de novo pathway; N(2)-formyl-N(1)-(5-phospho-D-ribosyl)glycinamide from N(1)-(5-phospho-D-ribosyl)glycinamide (10-formyl THF route): step 1/1. The protein is Phosphoribosylglycinamide formyltransferase, chloroplastic (PUR3) of Vigna unguiculata (Cowpea).